An 891-amino-acid polypeptide reads, in one-letter code: Inter-alpha-trypsin inhibitor heavy chain H3 (891 aa).

The N-terminal stretch at 1 to 20 (MALAQWPYLILALLSGLAVS) is a signal peptide. Positions 21 to 34 (GFPRNPSLLLGKRS) are excised as a propeptide. The region spanning 29–158 (LLGKRSLPGR…KVTFELTYEE (130 aa)) is the VIT domain. Asn91 is a glycosylation site (N-linked (GlcNAc...) asparagine). Residues 284–467 (SVVFVIDVSG…LQLQGFYEEV (184 aa)) form the VWFA domain. Residue Asp651 is modified to Aspartate 1-(chondroitin 4-sulfate)-ester. A propeptide spanning residues 652-891 (PHFIIQIPEK…HRDYIVPNLF (240 aa)) is cleaved from the precursor.

The protein belongs to the ITIH family. In terms of assembly, I-alpha-I plasma protease inhibitors are assembled from one or two heavy chains (H1, H2 or H3) and one light chain, bikunin. Inter-alpha-inhibitor (I-alpha-I) is composed of H1, H2 and bikunin, inter-alpha-like inhibitor (I-alpha-LI) of H2 and bikunin, and pre-alpha-inhibitor (P-alpha-I) of H3 and bikunin.

The protein localises to the secreted. Its function is as follows. May act as a carrier of hyaluronan in serum or as a binding protein between hyaluronan and other matrix protein, including those on cell surfaces in tissues to regulate the localization, synthesis and degradation of hyaluronan which are essential to cells undergoing biological processes. The sequence is that of Inter-alpha-trypsin inhibitor heavy chain H3 (ITIH3) from Bos taurus (Bovine).